A 66-amino-acid chain; its full sequence is Conotoxin Bu1.4 (66 aa).

The first 23 residues, 1 to 23 (MGMRMRMMFTVFLLVVLANTVVS), serve as a signal peptide directing secretion. Positions 24-46 (FPSDRDSDGADAEASDEPVEFER) are excised as a propeptide. The tract at residues 25–48 (PSDRDSDGADAEASDEPVEFERDE) is disordered. Over residues 32–42 (GADAEASDEPV) the composition is skewed to acidic residues. 2 disulfides stabilise this stretch: C51-C57 and C52-C62. T63 is modified (threonine amide).

Belongs to the conotoxin A superfamily. In terms of tissue distribution, expressed by the venom duct.

The protein localises to the secreted. In Conus bullatus (Bubble cone), this protein is Conotoxin Bu1.4.